A 426-amino-acid polypeptide reads, in one-letter code: 5-aminovalerate aminotransferase DavT (426 aa).

Residues 112-113 (GS), tyrosine 139, and 240-243 (DEVQ) contribute to the pyridoxal 5'-phosphate site. Lysine 269 is subject to N6-(pyridoxal phosphate)lysine. Threonine 298 contacts pyridoxal 5'-phosphate.

This sequence belongs to the class-III pyridoxal-phosphate-dependent aminotransferase family. Pyridoxal 5'-phosphate is required as a cofactor.

It catalyses the reaction 5-aminopentanoate + 2-oxoglutarate = 5-oxopentanoate + L-glutamate. Its function is as follows. Catalyzes the conversion of 5-aminovalerate to 5-oxopentanoate. The protein is 5-aminovalerate aminotransferase DavT (davT) of Pseudomonas aeruginosa (strain ATCC 15692 / DSM 22644 / CIP 104116 / JCM 14847 / LMG 12228 / 1C / PRS 101 / PAO1).